A 493-amino-acid chain; its full sequence is Tripartite motif-containing protein 5 (493 aa).

A2 carries the N-acetylalanine modification. Residues 15 to 59 (CPICLELLTQPLSLDCGHSFCQACLTANHKKSMLDKGESSCPVCR) form an RING-type zinc finger. Position 86 is a phosphoserine (S86). The segment at 90 to 132 (QKVDHCAHHGEKLLLFCQEDGKVICWLCERSQEHRGHHTFLTE) adopts a B box-type zinc-finger fold. Zn(2+) is bound by residues C95, H98, C117, and H123. Positions 131 to 240 (TEEVAREYQV…LISDLERRLQ (110 aa)) form a coiled coil. The required for interaction with GABARAP and for autophagy stretch occupies residues 185 to 198 (FEQLRDILDWEESN). The B30.2/SPRY domain maps to 281-493 (LKGMLEVFRE…VPMTLCSPSS (213 aa)).

It belongs to the TRIM/RBCC family. Can form homodimers and homotrimers. In addition to lower-order dimerization, also exhibits a higher-order multimerization and both low- and high-order multimerizations are essential for its restriction activity. Interacts with BTBD1 and BTBD2. Interacts with PSMC4, PSMC5, PSMD7 and HSPA8/HSC70. Interacts (via B30.2/SPRY domain) with HSPA1A/B. Interacts with PSMC2, MAP3K7/TAK1, TAB2 and TAB3. Interacts with SQSTM1. Interacts with TRIM6 and TRIM34. Interacts with ULK1 (phosphorylated form), GABARAP, GABARAPL1, GABARAPL2, MAP1LC3A, MAP1LC3C and BECN1. Post-translationally, degraded in a proteasome-independent fashion in the absence of viral infection but in a proteasome-dependent fashion following exposure to restriction sensitive virus. Autoubiquitinated in a RING finger- and UBE2D2-dependent manner. Monoubiquitinated by TRIM21. Deubiquitinated by Yersinia YopJ. Ubiquitination may not lead to proteasomal degradation.

The protein localises to the cytoplasm. Its subcellular location is the nucleus. It catalyses the reaction S-ubiquitinyl-[E2 ubiquitin-conjugating enzyme]-L-cysteine + [acceptor protein]-L-lysine = [E2 ubiquitin-conjugating enzyme]-L-cysteine + N(6)-ubiquitinyl-[acceptor protein]-L-lysine.. It functions in the pathway protein modification; protein ubiquitination. Its function is as follows. Capsid-specific restriction factor that prevents infection from non-host-adapted retroviruses. Blocks viral replication early in the life cycle, after viral entry but before reverse transcription. In addition to acting as a capsid-specific restriction factor, also acts as a pattern recognition receptor that activates innate immune signaling in response to the retroviral capsid lattice. Binding to the viral capsid triggers its E3 ubiquitin ligase activity, and in concert with the heterodimeric ubiquitin conjugating enzyme complex UBE2V1-UBE2N (also known as UBC13-UEV1A complex) generates 'Lys-63'-linked polyubiquitin chains, which in turn are catalysts in the autophosphorylation of the MAP3K7/TAK1 complex (includes TAK1, TAB2, and TAB3). Activation of the MAP3K7/TAK1 complex by autophosphorylation results in the induction and expression of NF-kappa-B and MAPK-responsive inflammatory genes, thereby leading to an innate immune response in the infected cell. Plays a role in regulating autophagy through activation of autophagy regulator BECN1 by causing its dissociation from its inhibitors BCL2 and TAB2. This chain is Tripartite motif-containing protein 5 (TRIM5), found in Pan troglodytes (Chimpanzee).